The following is a 254-amino-acid chain: Small ribosomal subunit protein uS3 (254 aa).

Residues 39-109 enclose the KH type-2 domain; sequence IRNYISARLK…EVKIDVIEVI (71 aa). Residues 220 to 254 are disordered; sequence EEMKKMQERRNDSRGRGRGDGRGAKRRRRPAAKKA. Residues 221-242 are compositionally biased toward basic and acidic residues; the sequence is EMKKMQERRNDSRGRGRGDGRG. Positions 243–254 are enriched in basic residues; the sequence is AKRRRRPAAKKA.

This sequence belongs to the universal ribosomal protein uS3 family. Part of the 30S ribosomal subunit. Forms a tight complex with proteins S10 and S14.

Binds the lower part of the 30S subunit head. Binds mRNA in the 70S ribosome, positioning it for translation. This is Small ribosomal subunit protein uS3 from Chlorobaculum parvum (strain DSM 263 / NCIMB 8327) (Chlorobium vibrioforme subsp. thiosulfatophilum).